We begin with the raw amino-acid sequence, 586 residues long: Asparagine synthetase [glutamine-hydrolyzing] 2 (586 aa).

Cys-2 (for GATase activity) is an active-site residue. Positions 2-185 (CGILAVLGCS…PGHLYSSKEK (184 aa)) constitute a Glutamine amidotransferase type-2 domain. L-glutamine contacts are provided by residues 50-54 (RLAIV), 75-77 (NGE), and Asp-98. Residues 193–516 (PPWFSEAIPS…PQNSARLSVP (324 aa)) enclose the Asparagine synthetase domain. ATP contacts are provided by residues Leu-231, Val-267, and 341-342 (SG).

The enzyme catalyses L-aspartate + L-glutamine + ATP + H2O = L-asparagine + L-glutamate + AMP + diphosphate + H(+). The protein operates within amino-acid biosynthesis; L-asparagine biosynthesis; L-asparagine from L-aspartate (L-Gln route): step 1/1. This Lotus japonicus (Lotus corniculatus var. japonicus) protein is Asparagine synthetase [glutamine-hydrolyzing] 2 (AS2).